We begin with the raw amino-acid sequence, 442 residues long: MSGLAYLDLPAARLARGEVALPGSKSISNRVLLLAALAEGSTEITGLLDSDDTRVMLAALRQLGVSVGEVADGCVTIEGVARFPTEQAELFLGNAGTAFRPLTAALALMGGDYRLSGVPRMHERPIGDLVDALRQFGAGIEYLGQAGYPPLRIGGGSIRVDGPVRVEGSVSSQFLTALLMAAPVLARRSGQDITIEVVGELISKPYIEITLNLMARFGVSVRRDGWRAFTIARDAVYRGPGRMAIEGDASTASYFLALGAIGGGPVRVTGVGEDSIQGDVAFAATLAAMGADVRYGPGWIETRGVRVAEGGRLKAFDADFNLIPDAAMTAATLALYADGPCRLRNIGSWRVKETDRIHAMHTELEKLGAGVQSGADWLEVAPPEPGGWRDAHIGTWDDHRMAMCFSLAAFGPAAVRILDPGCVSKTFPDYFDVYAGLLAARD.

Positions 25, 26, and 30 each coordinate 3-phosphoshikimate. A phosphoenolpyruvate-binding site is contributed by Lys25. Residues Gly96 and Arg124 each coordinate phosphoenolpyruvate. Ser171, Ser172, Gln173, Ser203, Asp325, and Lys352 together coordinate 3-phosphoshikimate. Gln173 is a binding site for phosphoenolpyruvate. Asp325 functions as the Proton acceptor in the catalytic mechanism. Residues Arg356, Arg400, and Lys425 each contribute to the phosphoenolpyruvate site.

Belongs to the EPSP synthase family. Monomer.

It localises to the cytoplasm. The enzyme catalyses 3-phosphoshikimate + phosphoenolpyruvate = 5-O-(1-carboxyvinyl)-3-phosphoshikimate + phosphate. It functions in the pathway metabolic intermediate biosynthesis; chorismate biosynthesis; chorismate from D-erythrose 4-phosphate and phosphoenolpyruvate: step 6/7. Its function is as follows. Catalyzes the transfer of the enolpyruvyl moiety of phosphoenolpyruvate (PEP) to the 5-hydroxyl of shikimate-3-phosphate (S3P) to produce enolpyruvyl shikimate-3-phosphate and inorganic phosphate. The chain is 3-phosphoshikimate 1-carboxyvinyltransferase from Bordetella pertussis (strain Tohama I / ATCC BAA-589 / NCTC 13251).